Here is a 352-residue protein sequence, read N- to C-terminus: Protein pelota homolog (352 aa).

The protein belongs to the eukaryotic release factor 1 family. Pelota subfamily. In terms of assembly, monomer. Requires a divalent metal cation as cofactor.

The protein localises to the cytoplasm. Functionally, may function in recognizing stalled ribosomes, interact with stem-loop structures in stalled mRNA molecules, and effect endonucleolytic cleavage of the mRNA. May play a role in the release non-functional ribosomes and degradation of damaged mRNAs. Has endoribonuclease activity. The protein is Protein pelota homolog of Thermofilum pendens (strain DSM 2475 / Hrk 5).